Here is a 603-residue protein sequence, read N- to C-terminus: NADH-ubiquinone oxidoreductase chain 5 (603 aa).

16 helical membrane passes run 4-24 (YATM…GALI), 38-58 (SIIA…MCLD), 87-107 (MTFI…SLWY), 122-142 (LIFL…QLFI), 144-160 (WEGV…WWYA), 171-191 (AILY…WFLL), 211-233 (TPLL…HPWL), 241-261 (TPVS…FLLI), 272-292 (LIQT…AVCA), 301-320 (IVAF…IGIN), 325-347 (AFLH…GSII), 370-390 (STSL…TGFY), 405-422 (NAWA…TSAY), 457-477 (LTIG…PMST), 482-502 (IPLY…LTAL), and 582-602 (GMIK…LLLI).

The protein belongs to the complex I subunit 5 family. As to quaternary structure, core subunit of respiratory chain NADH dehydrogenase (Complex I) which is composed of 45 different subunits.

The protein localises to the mitochondrion inner membrane. It catalyses the reaction a ubiquinone + NADH + 5 H(+)(in) = a ubiquinol + NAD(+) + 4 H(+)(out). Its function is as follows. Core subunit of the mitochondrial membrane respiratory chain NADH dehydrogenase (Complex I) which catalyzes electron transfer from NADH through the respiratory chain, using ubiquinone as an electron acceptor. Essential for the catalytic activity and assembly of complex I. The sequence is that of NADH-ubiquinone oxidoreductase chain 5 (MT-ND5) from Pan troglodytes (Chimpanzee).